A 177-amino-acid polypeptide reads, in one-letter code: Putative 3-methyladenine DNA glycosylase (177 aa).

This sequence belongs to the DNA glycosylase MPG family.

The polypeptide is Putative 3-methyladenine DNA glycosylase (Rickettsia felis (strain ATCC VR-1525 / URRWXCal2) (Rickettsia azadi)).